The chain runs to 123 residues: Secreted LysM effector Lys1 (123 aa).

The N-terminal stretch at 1-20 is a signal peptide; it reads MMGLAKTLLLASQLTAVVVA. A LysM domain is found at 72 to 118; that stretch reads KFCWVQAGNKCYQVAMENHISLADFLKWNPGAGSDCRTLWANTYACV.

This sequence belongs to the secreted LysM effector family.

Its function is as follows. Might have a role in sequestration of chitin oligosaccharides (breakdown products of fungal cell walls that are released during invasion and act as triggers of host immunity) to dampen host defense. In Pochonia chlamydosporia (strain 123) (Metacordyceps chlamydosporia), this protein is Secreted LysM effector Lys1.